Consider the following 370-residue polypeptide: Peptide chain release factor 2 (370 aa).

Q249 bears the N5-methylglutamine mark.

Belongs to the prokaryotic/mitochondrial release factor family. Methylated by PrmC. Methylation increases the termination efficiency of RF2.

It localises to the cytoplasm. In terms of biological role, peptide chain release factor 2 directs the termination of translation in response to the peptide chain termination codons UGA and UAA. This Kosmotoga olearia (strain ATCC BAA-1733 / DSM 21960 / TBF 19.5.1) protein is Peptide chain release factor 2.